An 813-amino-acid chain; its full sequence is Microtubule-associated protein 6 (813 aa).

Residues cysteine 5, cysteine 10, and cysteine 11 are each lipidated (S-palmitoyl cysteine). Disordered stretches follow at residues 36–283, 314–651, and 756–813; these read ATEH…AAAD, VKPI…KDES, and PLKD…ESSP. Over residues 41 to 50 the composition is skewed to pro residues; it reads GAPPQPPPPQ. Positions 51 to 62 are enriched in low complexity; the sequence is QQAQPALAPPSA. Residues 100–112 are compositionally biased toward gly residues; the sequence is GRSGPGPGLGSGS. Serine 102 bears the Phosphoserine mark. Residues 118-141 are mn 1; that stretch reads DSVMRQDYRAWKVQRPEPSCRPRS. Positions 121–141 are enriched in basic and acidic residues; the sequence is MRQDYRAWKVQRPEPSCRPRS. The segment at 126–140 is calmodulin-binding; the sequence is RAWKVQRPEPSCRPR. Tyrosine 143 is subject to Phosphotyrosine. Basic and acidic residues predominate over residues 149 to 173; that stretch reads PFERETQYQKDFRAWPLPRRGDHPW. The segment at 153–176 is mn 2; the sequence is ETQYQKDFRAWPLPRRGDHPWIPK. Positions 162–176 are calmodulin-binding; it reads AWPLPRRGDHPWIPK. Serine 187 is modified (phosphoserine). 4 calmodulin-binding regions span residues 189–203, 306–320, 357–371, and 384–398; these read PILGAPKRRPQSQER, RAWTDIKPVKPIKAK, RRRIRSLYSEPFKEP, and PKKTSASHKPTRKAK. The tract at residues 298-321 is mn 3; that stretch reads SSSYRNEFRAWTDIKPVKPIKAKP. Residues 367-376 are compositionally biased toward basic and acidic residues; it reads PFKEPPKVEK. Basic residues predominate over residues 383–398; it reads KPKKTSASHKPTRKAK. The span at 420–439 shows a compositional bias: basic and acidic residues; sequence KPDDKEQSKEMNNKLAEAKE. Over residues 443 to 454 the composition is skewed to polar residues; it reads QPVSDSSKTQGP. The span at 637–651 shows a compositional bias: basic and acidic residues; it reads KDQDPMVPEHPKDES. Serine 812 carries the phosphoserine modification.

Belongs to the STOP family. In terms of assembly, interacts with calmodulin (via C-terminus); the interaction is dependent on Ca(2+). Interacts (via C-terminus) with TMEM106B (via N-terminus). Interacts with ZDHHC17 (via ANK repeats). Interacts with ZDHHC13 (via ANK repeats). Palmitoylated. Probably depalmitoylated by ABHD17A, ABHD17B and ABHD17C. During neuronal polarization, palmitoylation and depalmitoylation cycles regulate MAP6 shuttling between secretory vesicles and microtubules, and its polarized distribution in the axon. In terms of tissue distribution, expressed in brain (at protein level). Expressed in spinal cord. Isoform 2 expression is up-regulated in the prefrontal cortex (Brodmann's area 46) of patients with schizophrenia (postmortem brain study).

Its subcellular location is the cytoplasm. It is found in the cytoskeleton. It localises to the golgi apparatus. The protein localises to the cell projection. The protein resides in the axon. Its subcellular location is the dendrite. It is found in the cytoplasmic vesicle. It localises to the secretory vesicle membrane. Its function is as follows. Involved in microtubule stabilization in many cell types, including neuronal cells. Specifically has microtubule cold stabilizing activity. Involved in dendrite morphogenesis and maintenance by regulating lysosomal trafficking via its interaction with TMEM106B. Regulates KIF5A-mediated axonal cargo transport. Regulates axonal growth during neuron polarization. The chain is Microtubule-associated protein 6 (MAP6) from Homo sapiens (Human).